Consider the following 169-residue polypeptide: MKKCSIILASVLLATSINAIADTPTPLNQQQPLEKIAPYPQAEKGMSRQVIFLEPQKDESRFKVELLIGKTLNVDCNRHMLGGNLETRTLSGWGFDYLVMDKISQPASTMMACPEDSKPQVKFVTANLGDAAMQRYNSRLPIVVYVPQGVEVKYRIWEAGEDIRSAQVK.

A signal peptide spans 1–21 (MKKCSIILASVLLATSINAIA). Cysteine 76 and cysteine 113 are disulfide-bonded.

This sequence belongs to the protease inhibitor I11 (ecotin) family. Homodimer.

It is found in the periplasm. In terms of biological role, general inhibitor of pancreatic serine proteases: inhibits chymotrypsin, trypsin, elastases, factor X, kallikrein as well as a variety of other proteases. This is Ecotin from Yersinia pseudotuberculosis serotype O:1b (strain IP 31758).